The chain runs to 389 residues: tRNA (cytosine(72)-C(5))-methyltransferase (389 aa).

In terms of domain architecture, PUA spans 92–167; the sequence is LPVVVANKYA…LAVEVTLPKF (76 aa). S-adenosyl-L-methionine-binding positions include 209 to 215, aspartate 233, arginine 238, aspartate 260, aspartate 277, and tyrosine 304; that span reads AAAPGGK. Cysteine 327 (nucleophile) is an active-site residue.

Belongs to the class I-like SAM-binding methyltransferase superfamily. RsmB/NOP family.

It carries out the reaction cytidine(72) in tRNA + S-adenosyl-L-methionine = 5-methylcytidine(72) in tRNA + S-adenosyl-L-homocysteine + H(+). The catalysed reaction is cytidine(72) in tRNA(Thr) + S-adenosyl-L-methionine = 5-methylcytidine(72) in tRNA(Thr) + S-adenosyl-L-homocysteine + H(+). The enzyme catalyses cytidine(72) in tRNA(Cys) + S-adenosyl-L-methionine = 5-methylcytidine(72) in tRNA(Cys) + S-adenosyl-L-homocysteine + H(+). Its function is as follows. S-adenosyl-L-methionine-dependent methyltransferase that specifically methylates the C5 position of cytosine 72 in several tRNAs. This modification appears to slightly promote the thermal stability of P.horikoshii tRNAs, but does not affect their amino acid accepting activity. Four elements in the acceptor stems of tRNAs are essential for substrate recognition by this enzyme: the target site C72, the 3'-CCA terminus, U73 or G73, and the second base pair C2:G71. This is tRNA (cytosine(72)-C(5))-methyltransferase from Pyrococcus horikoshii (strain ATCC 700860 / DSM 12428 / JCM 9974 / NBRC 100139 / OT-3).